A 436-amino-acid polypeptide reads, in one-letter code: Prenyltransferase nscD (436 aa).

This sequence belongs to the tryptophan dimethylallyltransferase family.

It participates in secondary metabolite biosynthesis. Prenyltransferase; part of the gene cluster that mediates the biosynthesis of neosartoricin B, a prenylated anthracenone that probably exhibits T-cell antiproliferative activity, suggestive of a physiological role as an immunosuppressive agent. The non-reducing polyketide synthase nscA probably synthesizes and cyclizes the decaketide backbone. The hydrolase nscB then mediates the product release through hydrolysis followed by spontaneous decarboxylation. The prenyltransferase nscD catalyzes the addition of the dimethylallyl group to the aromatic C5. The FAD-dependent monooxygenase nscC is then responsible for the stereospecific hydroxylation at C2. Neosartoricin B can be converted into two additional compounds neosartoricins C and D. Neosartoricin C is a spirocyclic compound that is cyclized through the attack of C3 hydroxyl on C14, followed by dehydration. On the other hand, neosartoricin D is a further cyclized compound in which attack of C2 on C14 in neosartoricin C results in the formation of the acetal-containing dioxabicyclo-octanone ring. Both of these compounds are novel and possibly represent related metabolites of the gene cluster. The polypeptide is Prenyltransferase nscD (Trichophyton rubrum (strain ATCC MYA-4607 / CBS 118892) (Athlete's foot fungus)).